We begin with the raw amino-acid sequence, 63 residues long: Large ribosomal subunit protein uL29 (63 aa).

It belongs to the universal ribosomal protein uL29 family.

In Idiomarina loihiensis (strain ATCC BAA-735 / DSM 15497 / L2-TR), this protein is Large ribosomal subunit protein uL29.